The following is a 547-amino-acid chain: Glucose-6-phosphate isomerase (547 aa).

Glutamate 354 functions as the Proton donor in the catalytic mechanism. Catalysis depends on residues histidine 385 and lysine 513.

Belongs to the GPI family.

Its subcellular location is the cytoplasm. The catalysed reaction is alpha-D-glucose 6-phosphate = beta-D-fructose 6-phosphate. It functions in the pathway carbohydrate biosynthesis; gluconeogenesis. It participates in carbohydrate degradation; glycolysis; D-glyceraldehyde 3-phosphate and glycerone phosphate from D-glucose: step 2/4. Catalyzes the reversible isomerization of glucose-6-phosphate to fructose-6-phosphate. This chain is Glucose-6-phosphate isomerase, found in Endomicrobium trichonymphae.